We begin with the raw amino-acid sequence, 182 residues long: Adenylate kinase isoenzyme 6 homolog (182 aa).

The segment at 1–20 (MATPETRRRPNILVTGSPGT) is disordered. ATP-binding residues include G19, G21, K22, S23, and T24. Positions 39–62 (EVSKEVRENNLQGDFDEQYNCHVL) are NMPbind. Residues 116 to 126 (SRGYSEFKIKE) are LID. R117 serves as a coordination point for ATP.

It belongs to the adenylate kinase family. AK6 subfamily. In terms of assembly, monomer and homodimer. Interacts with small ribosomal subunit protein uS11. Not a structural component of 43S pre-ribosomes, but transiently interacts with them by binding to uS11.

The protein resides in the cytoplasm. Its subcellular location is the nucleus. It catalyses the reaction AMP + ATP = 2 ADP. The catalysed reaction is ATP + H2O = ADP + phosphate + H(+). Its function is as follows. Broad-specificity nucleoside monophosphate (NMP) kinase that catalyzes the reversible transfer of the terminal phosphate group between nucleoside triphosphates and monophosphates. Also has ATPase activity. Involved in the late cytoplasmic maturation steps of the 40S ribosomal particles, specifically 18S rRNA maturation. While NMP activity is not required for ribosome maturation, ATPase activity is. Associates transiently with small ribosomal subunit protein uS11. ATP hydrolysis breaks the interaction with uS11. May temporarily remove uS11 from the ribosome to enable a conformational change of the ribosomal RNA that is needed for the final maturation step of the small ribosomal subunit. Its NMP activity may have a role in nuclear energy homeostasis. AMP and dAMP are the preferred substrates, but CMP and TMP are also good substrates. ATP and dATP are the best phosphate donors. This chain is Adenylate kinase isoenzyme 6 homolog, found in Caenorhabditis elegans.